We begin with the raw amino-acid sequence, 217 residues long: Peptide methionine sulfoxide reductase MsrA 1 (217 aa).

Cys54 is an active-site residue.

The protein belongs to the MsrA Met sulfoxide reductase family.

The catalysed reaction is L-methionyl-[protein] + [thioredoxin]-disulfide + H2O = L-methionyl-(S)-S-oxide-[protein] + [thioredoxin]-dithiol. It carries out the reaction [thioredoxin]-disulfide + L-methionine + H2O = L-methionine (S)-S-oxide + [thioredoxin]-dithiol. Its function is as follows. Has an important function as a repair enzyme for proteins that have been inactivated by oxidation. Catalyzes the reversible oxidation-reduction of methionine sulfoxide in proteins to methionine. The chain is Peptide methionine sulfoxide reductase MsrA 1 (msrA1) from Caulobacter vibrioides (strain ATCC 19089 / CIP 103742 / CB 15) (Caulobacter crescentus).